A 309-amino-acid polypeptide reads, in one-letter code: Nucleoside kinase (309 aa).

Positions 16, 42, and 46 each coordinate substrate. Gln-108 is a binding site for ATP. Substrate is bound by residues 110 to 112 (SYF) and Gln-166. Residues Asn-189 and 217–223 (KTYGKEG) each bind ATP. Asp-249 lines the substrate pocket. The active-site Proton acceptor is Asp-249.

The protein belongs to the carbohydrate kinase PfkB family. Homodimer. The cofactor is Mg(2+).

In terms of biological role, catalyzes the phosphorylation of a wide range of nucleosides to yield nucleoside monophosphates, using ATP, ITP or GTP as phosphate donor. The sequence is that of Nucleoside kinase from Methanothermobacter thermautotrophicus (strain ATCC 29096 / DSM 1053 / JCM 10044 / NBRC 100330 / Delta H) (Methanobacterium thermoautotrophicum).